Reading from the N-terminus, the 143-residue chain is Hemoglobin-1 (143 aa).

An N-acetylserine modification is found at serine 2. Positions 2-143 constitute a Globin domain; that stretch reads SLSAAQKDNV…ALMGMIRPNM (142 aa). Residue histidine 97 coordinates heme b.

The protein belongs to the globin family. Monomer.

It is found in the cytoplasm. Functionally, serves to transport hydrogen sulfide to autotrophic bacteria. This chain is Hemoglobin-1, found in Phacoides pectinatus (Thick lucine).